The sequence spans 242 residues: Carboxy-S-adenosyl-L-methionine synthase (242 aa).

Residues Y38, 63 to 65, 88 to 89, 116 to 117, and R199 contribute to the S-adenosyl-L-methionine site; these read GCS, DN, and DL.

The protein belongs to the class I-like SAM-binding methyltransferase superfamily. Cx-SAM synthase family. As to quaternary structure, homodimer.

The catalysed reaction is prephenate + S-adenosyl-L-methionine = carboxy-S-adenosyl-L-methionine + 3-phenylpyruvate + H2O. Catalyzes the conversion of S-adenosyl-L-methionine (SAM) to carboxy-S-adenosyl-L-methionine (Cx-SAM). The sequence is that of Carboxy-S-adenosyl-L-methionine synthase from Methylococcus capsulatus (strain ATCC 33009 / NCIMB 11132 / Bath).